Here is a 96-residue protein sequence, read N- to C-terminus: Alpha-elapitoxin-Al2b (96 aa).

Positions 1 to 21 (MKTLLLTLVVVTIVCLDFGGG) are cleaved as a signal peptide. 5 cysteine pairs are disulfide-bonded: cysteine 24-cysteine 41, cysteine 34-cysteine 62, cysteine 47-cysteine 51, cysteine 66-cysteine 77, and cysteine 78-cysteine 83.

This sequence belongs to the three-finger toxin family. Long-chain subfamily. Type II alpha-neurotoxin sub-subfamily. Expressed by the venom gland.

The protein resides in the secreted. In terms of biological role, potent long-chain postsynaptic neurotoxin. Pseudo-irreversibly inhibits the nicotinic acetylcholine receptor through competitive antagonism. The sequence is that of Alpha-elapitoxin-Al2b from Austrelaps labialis (Pygmy copperhead).